Reading from the N-terminus, the 363-residue chain is Teichoic acids export ATP-binding protein TagH (363 aa).

Positions 27 to 246 (KHFFNIGNVD…YRKFSKDFKA (220 aa)) constitute an ABC transporter domain. Position 60–67 (60–67 (GINGSGKS)) interacts with ATP. A unknown region spans residues 247 to 363 (QTAAYRKKYQ…KSQSVLFNSK (117 aa)).

The protein belongs to the ABC transporter superfamily. Teichoic acids exporter (TC 3.A.1.104.1) family. As to quaternary structure, the complex is composed of two ATP-binding proteins (TagH) and two transmembrane proteins (TagG).

Its subcellular location is the cell membrane. It carries out the reaction ATP + H2O + teichoic acidSide 1 = ADP + phosphate + teichoic acidSide 2.. In terms of biological role, part of the ABC transporter complex TagGH involved in teichoic acids export. Responsible for energy coupling to the transport system. The polypeptide is Teichoic acids export ATP-binding protein TagH (Lactiplantibacillus plantarum (strain ATCC BAA-793 / NCIMB 8826 / WCFS1) (Lactobacillus plantarum)).